Consider the following 494-residue polypeptide: Neuronal acetylcholine receptor subunit alpha-6 (494 aa).

The signal sequence occupies residues 1 to 25 (MLTSKGQGFLHGGLCLWLCVFTPFF). Residues 26 to 239 (KGCVGCATEE…ITYSFYIRRL (214 aa)) are Extracellular-facing. Asparagine 54 and asparagine 171 each carry an N-linked (GlcNAc...) asparagine glycan. Intrachain disulfides connect cysteine 158/cysteine 172 and cysteine 222/cysteine 223. 3 helical membrane passes run 240-264 (PMFY…VFYL), 272-290 (VTLC…LVIT), and 306-327 (YLLF…VLNI). At 328–465 (HYRTPTTHTM…WKYVAMVVDR (138 aa)) the chain is on the cytoplasmic side. Position 401 is a phosphoserine (serine 401). A helical membrane pass occupies residues 466–484 (VFLWVFIIVCVFGTAGLFL).

It belongs to the ligand-gated ion channel (TC 1.A.9) family. Acetylcholine receptor (TC 1.A.9.1) subfamily. Alpha-6/CHRNA6 sub-subfamily. In terms of assembly, neuronal AChR is composed of two different types of subunits: alpha and non-alpha (beta). CHRNA6/alpha-6 subunit can be combined to CHRNB2/beta-2, CHRNA4/alpha-4 and CHRNB3/beta-3 to give rise to functional receptors. Heteropentamers containing CHRNB3 have an stoichiometry of (CHRNA6:CHRNB2)2:CHRNB3. Interacts with LYPD6.

It localises to the synaptic cell membrane. The enzyme catalyses Ca(2+)(in) = Ca(2+)(out). The catalysed reaction is K(+)(in) = K(+)(out). It catalyses the reaction Na(+)(in) = Na(+)(out). Activated by a myriad of ligands such as acetylcholine, cytisine and nicotine. CHRNA6 nAChR activity is inhibited by the antagonists alpha-conotoxin MII and PIA, a small disulfide-constrained peptides from cone snails. Its function is as follows. Component of neuronal acetylcholine receptors (nAChRs) that function as pentameric, ligand-gated cation channels with high calcium permeability among other activities. nAChRs are excitatory neurotrasnmitter receptors formed by a collection of nAChR subunits known to mediate synaptic transmission in the nervous system and the neuromuscular junction. Each nAchR subunit confers differential attributes to channel properties, including activation, deactivation and desensitization kinetics, pH sensitivity, cation permeability, and binding to allosteric modulators. CHRNA6 forms pentameric channels with CHRNB2, CHRNB3 and CHRNA4 that exhibit high sensitivity to ACh and nicotine and are predominantly expressed in only a few brain areas, including dopaminergic neurons, norepirephrine neurons and cells of the visual system. nAChrs containing CHRNA6 subunits mediate endogenous cholinergic modulation of dopamine and gamma-aminobutyric acid (GABA) release in response to nicotine at nerve terminals. The protein is Neuronal acetylcholine receptor subunit alpha-6 of Homo sapiens (Human).